A 335-amino-acid polypeptide reads, in one-letter code: Biotin synthase (335 aa).

Residues 51-278 (NTVQLSSLLS…LAKVRLSAGR (228 aa)) enclose the Radical SAM core domain. [4Fe-4S] cluster contacts are provided by Cys66, Cys70, and Cys73. The [2Fe-2S] cluster site is built by Cys110, Cys141, Cys201, and Arg273.

This sequence belongs to the radical SAM superfamily. Biotin synthase family. Homodimer. [4Fe-4S] cluster is required as a cofactor. Requires [2Fe-2S] cluster as cofactor.

The enzyme catalyses (4R,5S)-dethiobiotin + (sulfur carrier)-SH + 2 reduced [2Fe-2S]-[ferredoxin] + 2 S-adenosyl-L-methionine = (sulfur carrier)-H + biotin + 2 5'-deoxyadenosine + 2 L-methionine + 2 oxidized [2Fe-2S]-[ferredoxin]. The protein operates within cofactor biosynthesis; biotin biosynthesis; biotin from 7,8-diaminononanoate: step 2/2. Catalyzes the conversion of dethiobiotin (DTB) to biotin by the insertion of a sulfur atom into dethiobiotin via a radical-based mechanism. The protein is Biotin synthase of Bordetella bronchiseptica (strain ATCC BAA-588 / NCTC 13252 / RB50) (Alcaligenes bronchisepticus).